Here is a 1235-residue protein sequence, read N- to C-terminus: MSHEELTALAPVGPAAFLYFSRLNAETQEILATLSLCDRSSSVVIAPLLAGLTVEADFGVSVRTPVLCYDGGVLTKVTSFCPFALYFHHTQGIVAFTEDHGDVHRLCEDARQKYALEAYMPEADRVPTDLAALCAAVGCQASETTVHVVVGNGLKEFLFAGQLIPCVEEATTVRLHGGEAVRVPLYPPTLFNSLQLDAEADEVSLDARSAFVEARGLYVPAVSETLFYYVYTSWCQSLRFSEPRVLIEAALRQFVHDSQQSVKLAPHKRYLGYMSQRLSSLEKDHLMLSDAVVCELAFSFASVFFDSAYQPAESMLFSEWPLVTNATDHRDLIRALTELKLHLSTHVAALVFSANSVLYQHRLVYLQSSARHPSAGGTASQETLLKAIQFTNGLSAACEDVYNDARKVLKFQGAPLKDERYGPQHLALVCGTCPQLVSGFVWYLNRVSVYNTGLSGSSTLTNHLVGCAAGLCEACGGTCCHTCYQTAFVRVRTRLPVVPKQPKKEPCVITVQSRFLNDVDILGSFGRRYNVDAKDGGLDGKGDDGVPGGGAGGGGGRDVSGGPSDGLGGGRGGGGGGDSGGMMGRGGRMLGASVDRTYRLNRILDYCRKMRLIDPVTGEDTFSAHGKSDFVAVFSALNKFVDDEALGFVSEVRLKSSRDEVAGATQAFNLDLNPYAVAFQPLLAYAYFRSVFYVIQNVALITATSYIVDNPLTTNLVSKWMTQHFQSIHGAFSTTSSRKGFLFTKQIKSSKNSDHDRLLDFRLYAQGTYAVVPMEIKLSRLSVPTLIMVRVKNRPIYRAGKGNAGSVFFRRDHVPRRNPAKGCLGFLLYRHHERLFPECGLPCLQFWQKVCSNALPKNVPIGDMGEFNAFVKFLVAVTADYQEHDLLDVAPDCVLSYVESRFHNKFLCYYGFKDYIGSLHGLTTRLTTQNHAQFPHVLGASPRFSSPAEFALHVKGLKTAGVPAPMAATVARESLVRSVFEHRSLVTVPVSVEKYAGINNSKEIYQFGQIGYFSGNGVERSLNVSSMSGQDYRFMRQRYLLATRLADVLIKRSRRENVLFDADLIKNRVMLALDAENLDCDPEVMAVYEILSVREEIPASDDVLFFVDGCEALAASLMDKFAALQEQGVEDFSLENLRRVLDADAQRLTDAAGGEVHDLSALFAPSGVGAASGVGGGGLLLGESVAGNSICFGVPGETGGGCFLVNAGEDEAGGVGGSSGGGGGSGLLPAKRSRL.

The interval 536–584 (GGLDGKGDDGVPGGGAGGGGGRDVSGGPSDGLGGGRGGGGGGDSGGMMG) is disordered. A compositionally biased stretch (gly residues) spans 545 to 584 (GVPGGGAGGGGGRDVSGGPSDGLGGGRGGGGGGDSGGMMG). The short motif at 846–847 (FW) is the Required for filament formation element. Residues 1214-1226 (GVGGSSGGGGGSG) are compositionally biased toward gly residues. A disordered region spans residues 1214 to 1235 (GVGGSSGGGGGSGLLPAKRSRL). A required for nuclear localization region spans residues 1232-1235 (RSRL).

Belongs to the herpesviridae major DNA-binding protein family. Homooligomers. Forms double-helical filaments necessary for the formation of replication compartments within the host nucleus. Interacts with the origin-binding protein. Interacts with the helicase primase complex; this interaction stimulates primer synthesis activity of the helicase-primase complex. Interacts with the DNA polymerase. Interacts with the alkaline exonuclease; this interaction increases its nuclease processivity.

It is found in the host nucleus. Its function is as follows. Plays several crucial roles in viral infection. Participates in the opening of the viral DNA origin to initiate replication by interacting with the origin-binding protein. May disrupt loops, hairpins and other secondary structures present on ssDNA to reduce and eliminate pausing of viral DNA polymerase at specific sites during elongation. Promotes viral DNA recombination by performing strand-transfer, characterized by the ability to transfer a DNA strand from a linear duplex to a complementary single-stranded DNA circle. Can also catalyze the renaturation of complementary single strands. Additionally, reorganizes the host cell nucleus, leading to the formation of prereplicative sites and replication compartments. This process is driven by the protein which can form double-helical filaments in the absence of DNA. The chain is Major DNA-binding protein from Homo sapiens (Human).